The following is a 379-amino-acid chain: tRNA-specific 2-thiouridylase MnmA (379 aa).

ATP-binding positions include 23–30 (AMSGGVDS) and Leu-49. Cys-117 functions as the Nucleophile in the catalytic mechanism. The cysteines at positions 117 and 214 are disulfide-linked. Gly-141 is an ATP binding site. Positions 163 to 165 (RDQ) are interaction with tRNA. Cys-214 serves as the catalytic Cysteine persulfide intermediate.

Belongs to the MnmA/TRMU family.

The protein resides in the cytoplasm. The catalysed reaction is S-sulfanyl-L-cysteinyl-[protein] + uridine(34) in tRNA + AH2 + ATP = 2-thiouridine(34) in tRNA + L-cysteinyl-[protein] + A + AMP + diphosphate + H(+). Catalyzes the 2-thiolation of uridine at the wobble position (U34) of tRNA, leading to the formation of s(2)U34. In Cereibacter sphaeroides (strain ATCC 17023 / DSM 158 / JCM 6121 / CCUG 31486 / LMG 2827 / NBRC 12203 / NCIMB 8253 / ATH 2.4.1.) (Rhodobacter sphaeroides), this protein is tRNA-specific 2-thiouridylase MnmA.